Here is a 425-residue protein sequence, read N- to C-terminus: 3-phosphoshikimate 1-carboxyvinyltransferase (425 aa).

3 residues coordinate 3-phosphoshikimate: Lys-22, Ser-23, and Arg-27. Lys-22 serves as a coordination point for phosphoenolpyruvate. Gly-95 and Arg-123 together coordinate phosphoenolpyruvate. 3-phosphoshikimate is bound by residues Ser-169, Ser-170, Gln-171, Ser-197, Asp-313, Asn-336, and Lys-340. Residue Gln-171 participates in phosphoenolpyruvate binding. Asp-313 serves as the catalytic Proton acceptor. The phosphoenolpyruvate site is built by Arg-344, Arg-386, and Lys-411.

The protein belongs to the EPSP synthase family. In terms of assembly, monomer.

It is found in the cytoplasm. It carries out the reaction 3-phosphoshikimate + phosphoenolpyruvate = 5-O-(1-carboxyvinyl)-3-phosphoshikimate + phosphate. It participates in metabolic intermediate biosynthesis; chorismate biosynthesis; chorismate from D-erythrose 4-phosphate and phosphoenolpyruvate: step 6/7. Catalyzes the transfer of the enolpyruvyl moiety of phosphoenolpyruvate (PEP) to the 5-hydroxyl of shikimate-3-phosphate (S3P) to produce enolpyruvyl shikimate-3-phosphate and inorganic phosphate. The polypeptide is 3-phosphoshikimate 1-carboxyvinyltransferase (Marinomonas sp. (strain MWYL1)).